A 459-amino-acid polypeptide reads, in one-letter code: Cysteine--tRNA ligase (459 aa).

C28 contacts Zn(2+). The 'HIGH' region motif lies at 30-40; the sequence is VTIYDLCHIGH. The Zn(2+) site is built by C209, H234, and E238. The 'KMSKS' region signature appears at 266-270; it reads KMSKS. An ATP-binding site is contributed by K269.

The protein belongs to the class-I aminoacyl-tRNA synthetase family. As to quaternary structure, monomer. The cofactor is Zn(2+).

It localises to the cytoplasm. The catalysed reaction is tRNA(Cys) + L-cysteine + ATP = L-cysteinyl-tRNA(Cys) + AMP + diphosphate. This chain is Cysteine--tRNA ligase, found in Shewanella loihica (strain ATCC BAA-1088 / PV-4).